Here is a 608-residue protein sequence, read N- to C-terminus: MEMESAAASTRFHQPHMERKMSAMACEIFNELRLEGKLCDVVIKVNGFEFSAHKNILCSCSSYFRALFTSGWNNTEKKVYNIPGISPDMMKLIIEYAYTRTVPITPDNVEKLLAAADQFNIMGIVRGCCEFLKSELCLDNCIGICKFTDYYYCPELRQKAYMFILHNFEEMVKVSAEFLELSVTELKDIIEKDELNVKQEDAVFEAILKWISHDPQNRKQHISILLPKVRLALMHAEYFMNNVKMNDYVKDSEECKPVIINALKAMYDLNMNGPSNSDFTNPLTRPRLPYAILFAIGGWSGGSPTNAIEAYDARADRWVNVTCEEESPRAYHGAAYLKGYVYIIGGFDSVDYFNSVKRFDPVKKTWHQVAPMHSRRCYVSVTVLGNFIYAMGGFDGYVRLNTAERYEPETNQWTLIAPMHEQRSDASATTLYGKVYICGGFNGNECLFTAEVYNTESNQWTVIAPMRSRRSGIGVIAYGEHVYAVGGFDGANRLRSAEAYSPVANTWRTIPTMFNPRSNFGIEVVDDLLFVVGGFNGFTTTFNVECYDEKTDEWYDAHDMSIYRSALSCCVVPGLANVEEYAARRDNFPGLALRDEVKYSASTSTLPV.

Residues 39 to 106 (CDVVIKVNGF…AYTRTVPITP (68 aa)) enclose the BTB domain. 6 Kelch repeats span residues 292–339 (ILFA…YLKG), 340–386 (YVYI…VLGN), 388–433 (IYAM…TLYG), 434–480 (KVYI…AYGE), 481–527 (HVYA…VVDD), and 529–574 (LFVV…VVPG). Serine 501 is modified (phosphoserine).

In terms of assembly, self-associates. Interacts with CUL3; indicative for the participation in an E3 ubiquitin ligase complex.

The protein localises to the cytoplasm. The protein operates within protein modification; protein ubiquitination. Functionally, may be a substrate-specific adapter of a CUL3-based E3 ubiquitin-protein ligase complex which mediates the ubiquitination and subsequent proteasomal degradation of target proteins during spermatogenesis. The polypeptide is Kelch-like protein 10 (KLHL10) (Homo sapiens (Human)).